We begin with the raw amino-acid sequence, 572 residues long: MATIGRRAYAEIFGPTVGDRVRLADTDLLIEVEADYTLRAGGYGEEVKFGGGKTIRDGMAQSQRTRAQGAVDTVLTNALILDHWGIVKADIGLKDGRIAAIGKAGNPDVQPGVDIVIGPGTEIISCEGNIVTAGGIDSHIHFICPQQIEEALASGITTMLGGGTGPATGTFATTATPGPWHIERMLQAADAFPMNLGFLGKGNASLPDALHEQIEAGVMGLKLHEDWGTTPSAISNCLDVADATDTQVAIHSDTLNESGFVENTIAAVGGRSICAFHTEGAGGGHAPDILRVVGEENFLPSSTNPTMPYTVNTLDEHVDMLMVCHHLDAGIAEDLAFAESRIRKETIAAEDVLHDLGAISMFSSDSQAMGRVGEVVLRCWQTAHKMKLQRGKLPEDSERNDNFRVKRYVAKYTINPAISHGIAHEVGSIEVGKWADLVIWKPAFFGVKPFTLIKGGTIAMAAMGDPNASIPTPQPVHYRPMFGSYGGSLARSSLTFVSQAGLAAGIKERYGLAKHLSAVKNIRNVRKKDLVHNGYTPKMEIDAQTYAVRADGHLLTCDPAVQLPLTQRYFLF.

Residues 134–572 form the Urease domain; it reads GGIDSHIHFI…LPLTQRYFLF (439 aa). Ni(2+) contacts are provided by H139, H141, and K222. K222 is modified (N6-carboxylysine). H224 is a binding site for substrate. Ni(2+)-binding residues include H251 and H277. The active-site Proton donor is H325. Ni(2+) is bound at residue D365.

It belongs to the metallo-dependent hydrolases superfamily. Urease alpha subunit family. Heterotrimer of UreA (gamma), UreB (beta) and UreC (alpha) subunits. Three heterotrimers associate to form the active enzyme. Requires Ni cation as cofactor. In terms of processing, carboxylation allows a single lysine to coordinate two nickel ions.

Its subcellular location is the cytoplasm. The enzyme catalyses urea + 2 H2O + H(+) = hydrogencarbonate + 2 NH4(+). Its pathway is nitrogen metabolism; urea degradation; CO(2) and NH(3) from urea (urease route): step 1/1. The sequence is that of Urease subunit alpha from Variovorax paradoxus (strain S110).